A 190-amino-acid polypeptide reads, in one-letter code: Holliday junction branch migration complex subunit RuvA (190 aa).

Residues 1-64 (MIGRITGTLI…EDAQLLYGFG (64 aa)) form a domain I region. The tract at residues 65–137 (SSAERSTFRE…MRGKLGADIG (73 aa)) is domain II. Positions 137-141 (GATPH) are flexible linker. The segment at 142–190 (AASGHQSDILNALLALGYSDKESQAALKKLPDGVDVSEGIRLALKALVR) is domain III.

This sequence belongs to the RuvA family. Homotetramer. Forms an RuvA(8)-RuvB(12)-Holliday junction (HJ) complex. HJ DNA is sandwiched between 2 RuvA tetramers; dsDNA enters through RuvA and exits via RuvB. An RuvB hexamer assembles on each DNA strand where it exits the tetramer. Each RuvB hexamer is contacted by two RuvA subunits (via domain III) on 2 adjacent RuvB subunits; this complex drives branch migration. In the full resolvosome a probable DNA-RuvA(4)-RuvB(12)-RuvC(2) complex forms which resolves the HJ.

Its subcellular location is the cytoplasm. In terms of biological role, the RuvA-RuvB-RuvC complex processes Holliday junction (HJ) DNA during genetic recombination and DNA repair, while the RuvA-RuvB complex plays an important role in the rescue of blocked DNA replication forks via replication fork reversal (RFR). RuvA specifically binds to HJ cruciform DNA, conferring on it an open structure. The RuvB hexamer acts as an ATP-dependent pump, pulling dsDNA into and through the RuvAB complex. HJ branch migration allows RuvC to scan DNA until it finds its consensus sequence, where it cleaves and resolves the cruciform DNA. This chain is Holliday junction branch migration complex subunit RuvA, found in Bordetella pertussis (strain Tohama I / ATCC BAA-589 / NCTC 13251).